We begin with the raw amino-acid sequence, 137 residues long: Large ribosomal subunit protein uL16 (137 aa).

This sequence belongs to the universal ribosomal protein uL16 family. As to quaternary structure, part of the 50S ribosomal subunit.

Binds 23S rRNA and is also seen to make contacts with the A and possibly P site tRNAs. In Rhodopseudomonas palustris (strain BisB18), this protein is Large ribosomal subunit protein uL16.